The sequence spans 603 residues: DNA mismatch repair protein MutL (603 aa).

Residues 336 to 346 (EVSKKQKEQQK) are compositionally biased toward basic and acidic residues. A disordered region spans residues 336 to 372 (EVSKKQKEQQKSEQIQMSFEENRQPKEPPTLFSKPNI).

This sequence belongs to the DNA mismatch repair MutL/HexB family.

This protein is involved in the repair of mismatches in DNA. It is required for dam-dependent methyl-directed DNA mismatch repair. May act as a 'molecular matchmaker', a protein that promotes the formation of a stable complex between two or more DNA-binding proteins in an ATP-dependent manner without itself being part of a final effector complex. The polypeptide is DNA mismatch repair protein MutL (Listeria innocua serovar 6a (strain ATCC BAA-680 / CLIP 11262)).